A 350-amino-acid polypeptide reads, in one-letter code: Sodium/calcium exchanger MaX1 (350 aa).

The next 10 membrane-spanning stretches (helical) occupy residues 4-24 (VNFL…DYFV), 39-59 (FVIG…ASSI), 69-89 (IVIG…VGVA), 101-121 (MLKR…VFAF), 125-145 (LSML…FFLF), 202-222 (GGFA…VIGA), 242-264 (VIGT…VSAA), 276-296 (VIGS…LFYP), 302-322 (MSLF…LIFI), and 330-350 (RWEG…LFYI).

The protein belongs to the Ca(2+):cation antiporter (CaCA) (TC 2.A.19) family.

The protein localises to the cell membrane. Its activity is regulated as follows. Calcium transport is inhibited by Na(+), K(+), Li(+), Mg(2+) or Mn(2+). Catalyzes Na(+)/Ca(2+) exchange. The transport is electrogenic with a likely stoichiometry of 3 or more Na(+) for each Ca(2+). Is K(+)-independent. This Methanosarcina acetivorans (strain ATCC 35395 / DSM 2834 / JCM 12185 / C2A) protein is Sodium/calcium exchanger MaX1 (maX1).